The sequence spans 423 residues: Serine--tRNA ligase (423 aa).

230-232 (TAE) is a binding site for L-serine. An ATP-binding site is contributed by 261-263 (RSE). Glu-284 is an L-serine binding site. 348-351 (EISS) provides a ligand contact to ATP. Ser-383 serves as a coordination point for L-serine.

This sequence belongs to the class-II aminoacyl-tRNA synthetase family. Type-1 seryl-tRNA synthetase subfamily. As to quaternary structure, homodimer. The tRNA molecule binds across the dimer.

The protein localises to the cytoplasm. It catalyses the reaction tRNA(Ser) + L-serine + ATP = L-seryl-tRNA(Ser) + AMP + diphosphate + H(+). It carries out the reaction tRNA(Sec) + L-serine + ATP = L-seryl-tRNA(Sec) + AMP + diphosphate + H(+). Its pathway is aminoacyl-tRNA biosynthesis; selenocysteinyl-tRNA(Sec) biosynthesis; L-seryl-tRNA(Sec) from L-serine and tRNA(Sec): step 1/1. Catalyzes the attachment of serine to tRNA(Ser). Is also able to aminoacylate tRNA(Sec) with serine, to form the misacylated tRNA L-seryl-tRNA(Sec), which will be further converted into selenocysteinyl-tRNA(Sec). The sequence is that of Serine--tRNA ligase from Levilactobacillus brevis (strain ATCC 367 / BCRC 12310 / CIP 105137 / JCM 1170 / LMG 11437 / NCIMB 947 / NCTC 947) (Lactobacillus brevis).